We begin with the raw amino-acid sequence, 404 residues long: Diaminopropionate ammonia-lyase (404 aa).

N6-(pyridoxal phosphate)lysine is present on Lys-78.

The protein belongs to the diaminopropionate ammonia-lyase family. Homodimer. It depends on pyridoxal 5'-phosphate as a cofactor.

The catalysed reaction is (S)-2,3-diaminopropanoate + H2O + H(+) = pyruvate + 2 NH4(+). It catalyses the reaction (R)-2,3-diaminopropanoate + H2O + H(+) = pyruvate + 2 NH4(+). Its activity is regulated as follows. Competitively inhibited by L- and D-alanine. Catalyzes the alpha,beta-elimination reaction of both L- and D-alpha,beta-diaminopropionate (DAP) to form pyruvate and ammonia. In vitro L- and D-isomers of serine are also degraded, though slowly; it is the only serine dehydratase which can eliminate an amino group at the beta-carbon position. In vivo L-, D- and a mixure of DL-DAP allow growth. DL-DAP is toxic in the absence of this enzyme, it may inhibit enzymes involved in the synthesis of pyruvate and aspartate, as well as amino acids derived from them. In Salmonella typhimurium (strain LT2 / SGSC1412 / ATCC 700720), this protein is Diaminopropionate ammonia-lyase (dpaL).